Here is a 206-residue protein sequence, read N- to C-terminus: RNA pyrophosphohydrolase (206 aa).

The Nudix hydrolase domain occupies 6 to 150 (GYRPNVGIVI…KRDVYRKVMK (145 aa)). The Nudix box motif lies at 38 to 59 (GGINEGENIETAMYRELYEEVG). Basic and acidic residues predominate over residues 162–191 (KPETVEKPRVERTEKRDFQKRDNQKREFRK). Positions 162–206 (KPETVEKPRVERTEKRDFQKRDNQKREFRKSARTWNNSHQKGKAQ) are disordered.

The protein belongs to the Nudix hydrolase family. RppH subfamily. Requires a divalent metal cation as cofactor.

Accelerates the degradation of transcripts by removing pyrophosphate from the 5'-end of triphosphorylated RNA, leading to a more labile monophosphorylated state that can stimulate subsequent ribonuclease cleavage. This chain is RNA pyrophosphohydrolase, found in Actinobacillus pleuropneumoniae serotype 3 (strain JL03).